The primary structure comprises 239 residues: Ribonuclease HII (239 aa).

The RNase H type-2 domain maps to 30 to 221 (GPVAGVDEVG…VRRVATRSNG (192 aa)). The a divalent metal cation site is built by aspartate 36, glutamate 37, and aspartate 130. Residues 217 to 239 (TRSNGAATAEREADPPQERDGTG) are disordered. Positions 225–239 (AEREADPPQERDGTG) are enriched in basic and acidic residues.

This sequence belongs to the RNase HII family. It depends on Mn(2+) as a cofactor. Mg(2+) is required as a cofactor.

It localises to the cytoplasm. The catalysed reaction is Endonucleolytic cleavage to 5'-phosphomonoester.. Endonuclease that specifically degrades the RNA of RNA-DNA hybrids. This chain is Ribonuclease HII, found in Mycobacterium ulcerans (strain Agy99).